Here is a 251-residue protein sequence, read N- to C-terminus: 5'-nucleotidase SurE (251 aa).

Positions 8, 9, 39, and 91 each coordinate a divalent metal cation.

This sequence belongs to the SurE nucleotidase family. Requires a divalent metal cation as cofactor.

The protein resides in the cytoplasm. It carries out the reaction a ribonucleoside 5'-phosphate + H2O = a ribonucleoside + phosphate. Nucleotidase that shows phosphatase activity on nucleoside 5'-monophosphates. This Thioalkalivibrio sulfidiphilus (strain HL-EbGR7) protein is 5'-nucleotidase SurE.